We begin with the raw amino-acid sequence, 464 residues long: UDP-N-acetylmuramate--L-alanine ligase (464 aa).

117 to 123 (GTHGKTT) lines the ATP pocket.

The protein belongs to the MurCDEF family.

The protein localises to the cytoplasm. The enzyme catalyses UDP-N-acetyl-alpha-D-muramate + L-alanine + ATP = UDP-N-acetyl-alpha-D-muramoyl-L-alanine + ADP + phosphate + H(+). The protein operates within cell wall biogenesis; peptidoglycan biosynthesis. In terms of biological role, cell wall formation. The chain is UDP-N-acetylmuramate--L-alanine ligase from Streptomyces avermitilis (strain ATCC 31267 / DSM 46492 / JCM 5070 / NBRC 14893 / NCIMB 12804 / NRRL 8165 / MA-4680).